A 423-amino-acid chain; its full sequence is Glutamyl-tRNA(Gln) amidotransferase subunit A (423 aa).

Residues K28 and S103 each act as charge relay system in the active site. S127 (acyl-ester intermediate) is an active-site residue.

The protein belongs to the amidase family. GatA subfamily. Heterotrimer of A, B and C subunits.

The enzyme catalyses L-glutamyl-tRNA(Gln) + L-glutamine + ATP + H2O = L-glutaminyl-tRNA(Gln) + L-glutamate + ADP + phosphate + H(+). Functionally, allows the formation of correctly charged Gln-tRNA(Gln) through the transamidation of misacylated Glu-tRNA(Gln) in organisms which lack glutaminyl-tRNA synthetase. The reaction takes place in the presence of glutamine and ATP through an activated gamma-phospho-Glu-tRNA(Gln). In Halobacterium salinarum (strain ATCC 700922 / JCM 11081 / NRC-1) (Halobacterium halobium), this protein is Glutamyl-tRNA(Gln) amidotransferase subunit A.